A 124-amino-acid polypeptide reads, in one-letter code: Secreted RxLR effector protein 49 (124 aa).

The N-terminal stretch at 1-22 (MIRRSPLVAVILFVAITHVVLA) is a signal peptide. The short motif at 57-60 (RSLR) is the RxLR element.

The protein belongs to the RxLR effector family.

Its subcellular location is the secreted. It localises to the host cytoplasm. The protein localises to the host nucleus. Functionally, effector that acts as a broad suppressor of cell death to interrupt plant immunity. Inhibits cell death induced by cell death-inducing proteins, including the PAMP elicitor INF1 from P.infestans. The polypeptide is Secreted RxLR effector protein 49 (Plasmopara viticola (Downy mildew of grapevine)).